Here is a 200-residue protein sequence, read N- to C-terminus: Charged multivesicular body protein 6-B (200 aa).

Gly2 carries N-myristoyl glycine lipidation. A coiled-coil region spans residues 9-102 (RRSRVTEQDK…FAQIEMKVIE (94 aa)). Positions 165-200 (QEDLELPEAPSEPLSDTVPEKQAVKNRPKPQLVAAS) are disordered. A Type-2 MIT-interacting motif motif is present at residues 168–179 (LELPEAPSEPLS).

This sequence belongs to the SNF7 family. As to quaternary structure, probable core component of the endosomal sorting required for transport complex III (ESCRT-III). ESCRT-III components are thought to multimerize to form a flat lattice on the perimeter membrane of the endosome.

It is found in the endomembrane system. The protein localises to the late endosome membrane. Functionally, probable core component of the endosomal sorting required for transport complex III (ESCRT-III) which is involved in multivesicular bodies (MVBs) formation and sorting of endosomal cargo proteins into MVBs. MVBs contain intraluminal vesicles (ILVs) that are generated by invagination and scission from the limiting membrane of the endosome and mostly are delivered to lysosomes enabling degradation of membrane proteins, such as stimulated growth factor receptors, lysosomal enzymes and lipids. In the ESCRT-III complex, it probably serves as an acceptor for the ESCRT-II complex on endosomal membranes. This is Charged multivesicular body protein 6-B (chmp6-b) from Xenopus laevis (African clawed frog).